Consider the following 365-residue polypeptide: Chorismate synthase (365 aa).

Residues 41–60 (MQHDLDRRRPGTSRYTTARR) form a disordered region. Residues Arg-48 and Arg-54 each contribute to the NADP(+) site. Residues 125-127 (RSS), 238-239 (NA), Gly-278, 293-297 (KPTSS), and Arg-319 each bind FMN.

Belongs to the chorismate synthase family. In terms of assembly, homotetramer. It depends on FMNH2 as a cofactor.

It carries out the reaction 5-O-(1-carboxyvinyl)-3-phosphoshikimate = chorismate + phosphate. The protein operates within metabolic intermediate biosynthesis; chorismate biosynthesis; chorismate from D-erythrose 4-phosphate and phosphoenolpyruvate: step 7/7. Functionally, catalyzes the anti-1,4-elimination of the C-3 phosphate and the C-6 proR hydrogen from 5-enolpyruvylshikimate-3-phosphate (EPSP) to yield chorismate, which is the branch point compound that serves as the starting substrate for the three terminal pathways of aromatic amino acid biosynthesis. This reaction introduces a second double bond into the aromatic ring system. This Shewanella amazonensis (strain ATCC BAA-1098 / SB2B) protein is Chorismate synthase.